A 1012-amino-acid chain; its full sequence is Klotho (1012 aa).

An N-terminal signal peptide occupies residues 1–33 (MPASAPPRRPRPPPPSLSLLLVLLGLGGRRLRA). Residues 34 to 981 (EPGDGAQTWA…ECSFFHTRKS (948 aa)) lie on the Extracellular side of the membrane. 2 glycosyl hydrolase-1 regions span residues 57–506 (FQGT…KNGF) and 515–953 (LEGT…SNGF). N-linked (GlcNAc...) asparagine glycans are attached at residues asparagine 106, asparagine 159, asparagine 283, asparagine 344, asparagine 607, asparagine 612, and asparagine 694. A helical transmembrane segment spans residues 982 to 1002 (LLAFIAFLFFASIISLSLIFY). The Cytoplasmic portion of the chain corresponds to 1003-1012 (YSKKGRRSYK).

Belongs to the glycosyl hydrolase 1 family. Klotho subfamily. Homodimer. Interacts with FGF23 and FGFR1. N-glycosylated. In terms of tissue distribution, present in cortical renal tubules (at protein level). Soluble peptide is present in serum and cerebrospinal fluid. Expressed in kidney, placenta, small intestine and prostate. Down-regulated in renal cell carcinomas, hepatocellular carcinomas, and in chronic renal failure kidney.

It localises to the cell membrane. The protein resides in the apical cell membrane. It is found in the secreted. It carries out the reaction a beta-D-glucuronoside + H2O = D-glucuronate + an alcohol. Functionally, may have weak glycosidase activity towards glucuronylated steroids. However, it lacks essential active site Glu residues at positions 239 and 872, suggesting it may be inactive as a glycosidase in vivo. May be involved in the regulation of calcium and phosphorus homeostasis by inhibiting the synthesis of active vitamin D. Essential factor for the specific interaction between FGF23 and FGFR1. The Klotho peptide generated by cleavage of the membrane-bound isoform may be an anti-aging circulating hormone which would extend life span by inhibiting insulin/IGF1 signaling. This Homo sapiens (Human) protein is Klotho (KL).